Here is a 154-residue protein sequence, read N- to C-terminus: Transcriptional repressor NrdR (154 aa).

Residues 3–34 (CPFCRHPDSRVVDSRETDEGQAIRRRRSCPEC) fold into a zinc finger. Residues 46–136 (LAVVKRSGVT…VYRSFESAAD (91 aa)) form the ATP-cone domain.

It belongs to the NrdR family. It depends on Zn(2+) as a cofactor.

Its function is as follows. Negatively regulates transcription of bacterial ribonucleotide reductase nrd genes and operons by binding to NrdR-boxes. This Mycobacterium sp. (strain JLS) protein is Transcriptional repressor NrdR.